A 423-amino-acid polypeptide reads, in one-letter code: Torsin-4A (423 aa).

Positions 47-68 (PGGGPDVGTGAPRPGCSPRAPR) are disordered. Phosphoserine is present on residues serine 63 and serine 81. A Phosphothreonine modification is found at threonine 89. Phosphoserine is present on serine 106. Residues 122-138 (CLLLLVAIVGFQVLNAI) form a helical membrane-spanning segment. 194–201 (GPSGVGKS) contributes to the ATP binding site.

Belongs to the ClpA/ClpB family. Torsin subfamily.

It is found in the membrane. The sequence is that of Torsin-4A (TOR4A) from Homo sapiens (Human).